An 880-amino-acid chain; its full sequence is Tyrosine-protein kinase receptor TYRO3 (880 aa).

A signal peptide spans 1–30; it reads MALRRSMGRPGLRPLLLAGLASLLLPGSAA. Ig-like C2-type domains are found at residues 31-118 and 129-210; these read AGLK…TKIS and PFFT…AIIR. The Extracellular segment spans residues 31–419; that stretch reads AGLKLMGAPV…QGPPHSRTSW (389 aa). N-linked (GlcNAc...) asparagine glycans are attached at residues Asn53, Asn75, Asn181, Asn220, Asn230, Asn283, Asn356, and Asn370. Intrachain disulfides connect Cys54–Cys107 and Cys150–Cys193. Fibronectin type-III domains follow at residues 217–310 and 315–406; these read APFN…TKGL and APQN…SHDH. Residues 420 to 440 form a helical membrane-spanning segment; it reads VPVVLGVLTALITAAALALIL. The Cytoplasmic portion of the chain corresponds to 441–880; the sequence is LRKRRKETRF…QQGLLPHSSC (440 aa). Position 456 is a phosphoserine (Ser456). The 278-residue stretch at 508–785 folds into the Protein kinase domain; it reads FTLGRMLGKG…LENILGHLSV (278 aa). ATP is bound by residues 514 to 522 and Lys540; that span reads LGKGEFGSV. Asp645 functions as the Proton acceptor in the catalytic mechanism. Tyr671, Tyr675, Tyr676, and Tyr794 each carry phosphotyrosine; by autocatalysis. Disordered stretches follow at residues 804 to 827 and 842 to 864; these read AENGSPELPCGEQSSSEAGDGSGM and SPGGLAESPGQLEQQPESPLNEN. 2 positions are modified to phosphoserine: Ser808 and Ser859. The segment covering 852–864 has biased composition (polar residues); it reads QLEQQPESPLNEN.

The protein belongs to the protein kinase superfamily. Tyr protein kinase family. AXL/UFO subfamily. As to quaternary structure, monomer and homodimer. Interacts (via N-terminus) with extracellular ligands TULP1 and GAS6. Interacts with PIK3R1; this interaction increases PI3-kinase activity. Post-translationally, autophosphorylated. Abundant in the brain and lower levels in other tissues.

The protein resides in the cell membrane. It catalyses the reaction L-tyrosyl-[protein] + ATP = O-phospho-L-tyrosyl-[protein] + ADP + H(+). Functionally, receptor tyrosine kinase that transduces signals from the extracellular matrix into the cytoplasm by binding to several ligands including TULP1 or GAS6. Regulates many physiological processes including cell survival, migration and differentiation. Ligand binding at the cell surface induces dimerization and autophosphorylation of TYRO3 on its intracellular domain that provides docking sites for downstream signaling molecules. Following activation by ligand, interacts with PIK3R1 and thereby enhances PI3-kinase activity. Activates the AKT survival pathway, including nuclear translocation of NF-kappa-B and up-regulation of transcription of NF-kappa-B-regulated genes. TYRO3 signaling plays a role in various processes such as neuron protection from excitotoxic injury, platelet aggregation and cytoskeleton reorganization. Also plays an important role in inhibition of Toll-like receptors (TLRs)-mediated innate immune response by activating STAT1, which selectively induces production of suppressors of cytokine signaling SOCS1 and SOCS3. This chain is Tyrosine-protein kinase receptor TYRO3 (Tyro3), found in Rattus norvegicus (Rat).